A 472-amino-acid chain; its full sequence is Protein PIN-LIKES 1 (472 aa).

At 1–93 the chain is on the lumenal side; the sequence is MSLTQSAKLH…FYSMRMRLLD (93 aa). A helical transmembrane segment spans residues 94-114; that stretch reads LFITSSIPVAKILLITGIGFY. Over 115–133 the chain is Cytoplasmic; that stretch reads LALDQVNILNHDARKQLNN. The chain crosses the membrane as a helical span at residues 134–154; that stretch reads IVFYVFSPSLVASSLSETITY. The Lumenal segment spans residues 155 to 161; it reads ESMVKMW. Residues 162–182 traverse the membrane as a helical segment; it reads FMPLNVLLTFIIGSFLGWIVI. Topologically, residues 183–193 are cytoplasmic; the sequence is KITKPPSHLRG. Residues 194–214 traverse the membrane as a helical segment; it reads IIVGCCAAGNLGNMPLIIIPA. The Lumenal portion of the chain corresponds to 215–231; the sequence is ICNEKGSPFGDPESCEK. Residues 232 to 252 form a helical membrane-spanning segment; the sequence is FGLGYIALSMAIGAIYIWTYV. The Cytoplasmic segment spans residues 253-309; sequence YNLMRMLANPAGETAINSTSSTMPLISPKVEVAEQVGTWGKVKQRVCSVAEKINLRT. The chain crosses the membrane as a helical span at residues 310-330; that stretch reads IFAPSTIAALIALAVGLNPLL. The Lumenal portion of the chain corresponds to 331–347; the sequence is RKLLVGNTAPLRVIEDS. A helical membrane pass occupies residues 348-368; that stretch reads VSLLGDGAIPVLTLIVGGNLL. At 369 to 379 the chain is on the cytoplasmic side; the sequence is NGLRGSGINKS. A helical transmembrane segment spans residues 380 to 400; sequence VIMGVVVVRYLLLPILGVFIV. Residues 401 to 413 are Lumenal-facing; sequence RGAHYLGLVTSEP. Residues 414–434 form a helical membrane-spanning segment; it reads LYQFVLLLQYVVPPAMNLGTI. Over 435-446 the chain is Cytoplasmic; sequence TQLFGSGESECS. Residues 447–467 traverse the membrane as a helical segment; the sequence is VILFWSYALASVSLTVWPTFF. The Lumenal portion of the chain corresponds to 468-472; that stretch reads MWLVA.

Belongs to the auxin efflux carrier (TC 2.A.69.2) family. As to expression, expressed in flowers.

The protein localises to the endoplasmic reticulum membrane. Involved in cellular auxin homeostasis by regulating auxin metabolism. Regulates intracellular auxin accumulation at the endoplasmic reticulum and thus auxin availability for nuclear auxin signaling. This chain is Protein PIN-LIKES 1, found in Arabidopsis thaliana (Mouse-ear cress).